A 505-amino-acid chain; its full sequence is UDP-N-acetylglucosamine diphosphorylase 1 (505 aa).

A compositionally biased stretch (basic and acidic residues) spans Met-1–Asn-10. Residues Met-1–Ser-32 are disordered. The segment covering Thr-14–Thr-24 has biased composition (low complexity). A Substrate binding motif is present at residues Leu-134–Gly-137. Residue Asn-253 participates in substrate binding. A Substrate binding motif is present at residues Glu-335 to Tyr-336. Lys-432 contributes to the substrate binding site.

Belongs to the UDPGP type 1 family. In terms of assembly, monomer. It depends on Mg(2+) as a cofactor. The cofactor is Mn(2+). In terms of tissue distribution, expressed in root tips, stipules and mature pollen grains.

It carries out the reaction N-acetyl-alpha-D-glucosamine 1-phosphate + UTP + H(+) = UDP-N-acetyl-alpha-D-glucosamine + diphosphate. The catalysed reaction is N-acetyl-alpha-D-galactosamine 1-phosphate + UTP + H(+) = UDP-N-acetyl-alpha-D-galactosamine + diphosphate. It participates in nucleotide-sugar biosynthesis; UDP-N-acetyl-alpha-D-glucosamine biosynthesis; UDP-N-acetyl-alpha-D-glucosamine from N-acetyl-alpha-D-glucosamine 1-phosphate: step 1/1. Its activity is regulated as follows. Inhibited by hygromycin and streptomycin, but not by gentamycin or kanamycin. Its function is as follows. Uridylyltransferase involved in the biosynthesis of UDP-glucosamine, an essential precursor for glycoprotein and glycolipid synthesis. Can use both UDP-glucosamine and the 4-epimer UDP-galactosamine as substrates, but no other sugars or NTPs. Acts redundantly with GLCNAC1PUT2. Required for gametogenesis and embryo development. This is UDP-N-acetylglucosamine diphosphorylase 1 (GLCNAC1PUT1) from Arabidopsis thaliana (Mouse-ear cress).